The primary structure comprises 327 residues: GTPase Obg (327 aa).

Residues 3 to 160 form the Obg domain; that stretch reads NKFTDFIKIY…FIFVLELKIL (158 aa). Residues 161 to 327 form the OBG-type G domain; the sequence is ADVGLIGLPN…LIYYICNILS (167 aa). Residues 167–174, 192–196, 214–217, 281–284, and 308–310 contribute to the GTP site; these read GLPNSGKS, FTTLN, DIPG, SKSD, and SSF. Mg(2+)-binding residues include S174 and T194.

Belongs to the TRAFAC class OBG-HflX-like GTPase superfamily. OBG GTPase family. In terms of assembly, monomer. Mg(2+) serves as cofactor.

Its subcellular location is the cytoplasm. Its function is as follows. An essential GTPase which binds GTP, GDP and possibly (p)ppGpp with moderate affinity, with high nucleotide exchange rates and a fairly low GTP hydrolysis rate. Plays a role in control of the cell cycle, stress response, ribosome biogenesis and in those bacteria that undergo differentiation, in morphogenesis control. The chain is GTPase Obg from Karelsulcia muelleri (strain GWSS) (Sulcia muelleri).